The chain runs to 186 residues: ATP synthase subunit delta (186 aa).

Belongs to the ATPase delta chain family. In terms of assembly, F-type ATPases have 2 components, F(1) - the catalytic core - and F(0) - the membrane proton channel. F(1) has five subunits: alpha(3), beta(3), gamma(1), delta(1), epsilon(1). F(0) has three main subunits: a(1), b(2) and c(10-14). The alpha and beta chains form an alternating ring which encloses part of the gamma chain. F(1) is attached to F(0) by a central stalk formed by the gamma and epsilon chains, while a peripheral stalk is formed by the delta and b chains.

Its subcellular location is the cell inner membrane. Its function is as follows. F(1)F(0) ATP synthase produces ATP from ADP in the presence of a proton or sodium gradient. F-type ATPases consist of two structural domains, F(1) containing the extramembraneous catalytic core and F(0) containing the membrane proton channel, linked together by a central stalk and a peripheral stalk. During catalysis, ATP synthesis in the catalytic domain of F(1) is coupled via a rotary mechanism of the central stalk subunits to proton translocation. Functionally, this protein is part of the stalk that links CF(0) to CF(1). It either transmits conformational changes from CF(0) to CF(1) or is implicated in proton conduction. The polypeptide is ATP synthase subunit delta (Leptospira interrogans serogroup Icterohaemorrhagiae serovar copenhageni (strain Fiocruz L1-130)).